The chain runs to 105 residues: Putative membrane protein insertion efficiency factor (105 aa).

The protein belongs to the UPF0161 family.

It is found in the cell inner membrane. Functionally, could be involved in insertion of integral membrane proteins into the membrane. This Nitratidesulfovibrio vulgaris (strain DSM 19637 / Miyazaki F) (Desulfovibrio vulgaris) protein is Putative membrane protein insertion efficiency factor.